A 29-amino-acid chain; its full sequence is U20-ctenitoxin-Co1a (29 aa).

2 disulfide bridges follow: Cys-3–Cys-16 and Cys-10–Cys-21.

In terms of tissue distribution, expressed by the venom gland.

Its subcellular location is the secreted. This chain is U20-ctenitoxin-Co1a, found in Ctenus ornatus (Brazilian spider).